The sequence spans 118 residues: Evasin P1080 (118 aa).

The N-terminal stretch at 1–19 is a signal peptide; it reads FFQLAVFVVILFNINLLSA. Intrachain disulfides connect Cys-41–Cys-60, Cys-45–Cys-62, and Cys-56–Cys-73. The N-linked (GlcNAc...) asparagine glycan is linked to Asn-44. 2 N-linked (GlcNAc...) asparagine glycosylation sites follow: Asn-67 and Asn-104.

It localises to the secreted. Functionally, salivary chemokine-binding protein which binds to host chemokines CXCL1, CXCL2, CXCL3, CXCL4, CXCL5, CXCL6, CXCL10, CXCL11 and CXCL13. The polypeptide is Evasin P1080 (Ixodes ricinus (Common tick)).